The sequence spans 508 residues: MASPALEELVLNSRHRLVRGLKQQKASADQIEEEVAKLLKLKAQLGHDESKQKFVLKTPKGTRDYSPRQMAVREKVFDVIICCFKRHGAEVIDTPVFELKETLMGKYGQDCKLIYDLKDQGGELLSLRYDLTVPFGRYLAMNNLTNIKRYHIAKVYRRDNPAMTRGRYLNSITVDFDIAGQFDPMIPDAECLKIMCEILSSLQIGKFLVKVNDRRILDGMFAVCGVPDSKFRTICSSVDKLDKVSWEEVKNEMVGEKGLAPEVADRIGDYVQQHGEVCLVEQLLQDPKLSQNKQAVEGLGDLKLLFEYLTLFGIDDKISFDLSLARGLDYYTGVIYVAVLLQMPTGAGEEPWCGQCGCWRRYDGLVGMFDPKGRKVPCVGLSIGVERIFSIVEQRLEALEEKVRTTETQVLVASAQKKLAGGETKACLQLWDAGIKAELLYKKNPKLLNQLQYCEETGIPLVAIIGEQELKDGVIKLRSVASREEVDVRREDLVEEIRRRTNQPLYVC.

Residues 3 to 59 enclose the WHEP-TRS domain; the sequence is SPALEELVLNSRHRLVRGLKQQKASADQIEEEVAKLLKLKAQLGHDESKQKFVLKTP. Ser66 carries the phosphoserine modification. L-histidine contacts are provided by residues 130–132, Arg157, Asp177, Arg326, and 330–331; these read DLT and YY.

It belongs to the class-II aminoacyl-tRNA synthetase family. Homodimer.

The protein resides in the cytoplasm. It catalyses the reaction tRNA(His) + L-histidine + ATP = L-histidyl-tRNA(His) + AMP + diphosphate + H(+). Catalyzes the ATP-dependent ligation of histidine to the 3'-end of its cognate tRNA, via the formation of an aminoacyl-adenylate intermediate (His-AMP). Plays a role in axon guidance. This chain is Histidine--tRNA ligase, cytoplasmic (HARS1), found in Mesocricetus auratus (Golden hamster).